The sequence spans 195 residues: Imidazoleglycerol-phosphate dehydratase (195 aa).

Belongs to the imidazoleglycerol-phosphate dehydratase family.

It localises to the cytoplasm. It catalyses the reaction D-erythro-1-(imidazol-4-yl)glycerol 3-phosphate = 3-(imidazol-4-yl)-2-oxopropyl phosphate + H2O. It functions in the pathway amino-acid biosynthesis; L-histidine biosynthesis; L-histidine from 5-phospho-alpha-D-ribose 1-diphosphate: step 6/9. The protein is Imidazoleglycerol-phosphate dehydratase of Burkholderia lata (strain ATCC 17760 / DSM 23089 / LMG 22485 / NCIMB 9086 / R18194 / 383).